Reading from the N-terminus, the 815-residue chain is Lon protease 2 (815 aa).

In terms of domain architecture, Lon N-terminal spans L19–I212. ATP is bound at residue G365–T372. Residues R601 to S782 enclose the Lon proteolytic domain. Residues S688 and K731 contribute to the active site.

This sequence belongs to the peptidase S16 family. In terms of assembly, homohexamer. Organized in a ring with a central cavity.

It localises to the cytoplasm. The enzyme catalyses Hydrolysis of proteins in presence of ATP.. In terms of biological role, ATP-dependent serine protease that mediates the selective degradation of mutant and abnormal proteins as well as certain short-lived regulatory proteins. Required for cellular homeostasis and for survival from DNA damage and developmental changes induced by stress. Degrades polypeptides processively to yield small peptide fragments that are 5 to 10 amino acids long. Binds to DNA in a double-stranded, site-specific manner. The polypeptide is Lon protease 2 (Herpetosiphon aurantiacus (strain ATCC 23779 / DSM 785 / 114-95)).